The primary structure comprises 910 residues: E3 ubiquitin-protein ligase MARCHF6 (910 aa).

M1 carries the post-translational modification N-acetylmethionine. An RING-CH-type zinc finger spans residues 1 to 62 (MDTAEEDICR…ELCKHRFAFT (62 aa)). Over 1–91 (MDTAEEDICR…LVTSIGTAIR (91 aa)) the chain is Cytoplasmic. Positions 9, 12, 26, 28, 36, 39, 52, and 55 each coordinate Zn(2+). The chain crosses the membrane as a helical span at residues 92-112 (YWFHYTLVAFAWLGVVPLTAC). Topologically, residues 113 to 142 (RIYKCLFTGSVSSLLTLPLDMLSTENLLAD) are extracellular. The chain crosses the membrane as a helical span at residues 143–163 (CLQGCFVVTCTLCAFISLVWL). The Cytoplasmic segment spans residues 164-283 (REQIVHGGAP…WERMLGLDGS (120 aa)). The disordered stretch occupies residues 185–256 (AAGHHQNEAP…AADANNGAQD (72 aa)). The segment covering 223–248 (DAQDDQAEEEEEDNEEEDDAGVEDAA) has biased composition (acidic residues). The helical transmembrane segment at 284-304 (LVFLEHVFWVVSLNTLFILVF) threads the bilayer. Over 305-336 (AFCPYHIGHFSLVGLGFEEHVQASHFEGLITT) the chain is Extracellular. A helical transmembrane segment spans residues 337–357 (IVGYILLAITLIICHGLATLV). Topologically, residues 358–376 (KFHRSRRLLGVCYIVVKVS) are cytoplasmic. The chain crosses the membrane as a helical span at residues 377–397 (LLVVVEIGVFPLICGWWLDIC). The Extracellular portion of the chain corresponds to 398–421 (SLEMFDATLKDRELSFQSAPGTTM). Residues 422–442 (FLHWLVGMVYVFYFASFILLL) traverse the membrane as a helical segment. Residues 443 to 480 (REVLRPGVLWFLRNLNDPDFNPVQEMIHLPIYRHLRRF) lie on the Cytoplasmic side of the membrane. Residues 481–501 (ILSVIVFGSIVLLMLWLPIRI) form a helical membrane-spanning segment. Residues 502–519 (IKSVLPNFLPYNVMLYSD) are Extracellular-facing. Residues 520-540 (APVSELSLELLLLQVVLPALL) traverse the membrane as a helical segment. Topologically, residues 541–632 (EQGHTRQWLK…YRRPLNFPLR (92 aa)) are cytoplasmic. A helical transmembrane segment spans residues 633-653 (IFLLIVFMCITLLIASLICLT). Residues 654–678 (LPVFAGRWLMSFWTGTAKIHELYTA) are Extracellular-facing. Residues 679–699 (ACGLYVCWLTIRAVTVMVAWM) form a helical membrane-spanning segment. The Cytoplasmic segment spans residues 700–721 (PQGRRVIFQKVKEWSLMIMKTL). A helical membrane pass occupies residues 722–742 (IVAVLLAGVVPLLLGLLFELV). Residues 743 to 764 (IVAPLRVPLDQTPLFYPWQDWA) are Extracellular-facing. Residues 765–785 (LGVLHAKIIAAITLMGPQWWL) form a helical membrane-spanning segment. Residues 786-815 (KTVIEQVYANGIRNIDLHYIVRKLAAPVIS) lie on the Cytoplasmic side of the membrane. Residues 816–836 (VLLLSLCVPYVIASGVVPLLG) form a helical membrane-spanning segment. The Extracellular segment spans residues 837-848 (VTAEMQNLVHRR). The chain crosses the membrane as a helical span at residues 849-869 (IYPFLLMVVVLMAILSFQVRQ). Residues 870–910 (FKRLYEHIKNDKYLVGQRLVNYERKSGKQGSSPPPPQSSQE) lie on the Cytoplasmic side of the membrane.

In terms of assembly, interacts with DIO2. Interacts with SQLE. In terms of processing, auto-ubiquitinated, which results in proteasomal degradation. Deubiquitinated by USP19; protecting MARCHF6 from p97-mediated proteasomal degradation. As to expression, present in brain (at protein level).

Its subcellular location is the endoplasmic reticulum membrane. The enzyme catalyses S-ubiquitinyl-[E2 ubiquitin-conjugating enzyme]-L-cysteine + [acceptor protein]-L-lysine = [E2 ubiquitin-conjugating enzyme]-L-cysteine + N(6)-ubiquitinyl-[acceptor protein]-L-lysine.. The protein operates within protein modification; protein ubiquitination. Endoplasmic reticulum membrane-associated E3 ubiquitin ligase that plays a critical role in mitigating endoplasmic reticulum stress, the regulation of cholesterol and lipid homeostasis, and ferroptosis. Acts as a pivotal component of both the Ac/N-degron pathway (targeting the N-terminal acetyl group of substrates) and the ER-associated protein degradation-cytosol (ERAD-C) pathway (targeting misfolded substrates). For instance, mediates the degradation of Ac/N-degron-bearing proteins such as the G-protein regulator RGS2 and the lipid droplet protein PLIN2. Suppresses endoplasmic reticulum stress and ferroptosis through cytosolic POMC degradation. Prevents ferroptosis by acting as a NADPH sensor during lipid peroxidation through its C-terminal regulatory region. Facilitates also the degradation of selected endoplasmic reticulum proteins by associating with signal peptide peptidase for the turnover of endogenous tail-anchored proteins. Promotes ubiquitination of DIO2, leading to its degradation. By ubiquitinating and thereby modulating the stability of many proteins of the cholesterol pathway including SQLE, CYP51A1, CYP11A1 and HMGCR, acts as a crucial post-translational regulator of cholesterol synthesis. The polypeptide is E3 ubiquitin-protein ligase MARCHF6 (Homo sapiens (Human)).